Here is a 211-residue protein sequence, read N- to C-terminus: Sec-independent protein translocase protein TatB (211 aa).

The chain crosses the membrane as a helical span at residues 1–21; that stretch reads MFDIGVGELTLIAVVALVVLG. Residues 175–211 form a disordered region; sequence AHLTSAPAPPVTVAPVDAGTSASPTPSEPTKIQEKQP. The span at 194 to 204 shows a compositional bias: polar residues; the sequence is TSASPTPSEPT.

The protein belongs to the TatB family. In terms of assembly, the Tat system comprises two distinct complexes: a TatABC complex, containing multiple copies of TatA, TatB and TatC subunits, and a separate TatA complex, containing only TatA subunits. Substrates initially bind to the TatABC complex, which probably triggers association of the separate TatA complex to form the active translocon.

The protein resides in the cell inner membrane. Its function is as follows. Part of the twin-arginine translocation (Tat) system that transports large folded proteins containing a characteristic twin-arginine motif in their signal peptide across membranes. Together with TatC, TatB is part of a receptor directly interacting with Tat signal peptides. TatB may form an oligomeric binding site that transiently accommodates folded Tat precursor proteins before their translocation. This chain is Sec-independent protein translocase protein TatB, found in Xanthomonas oryzae pv. oryzae (strain MAFF 311018).